A 747-amino-acid polypeptide reads, in one-letter code: Plakophilin-1 (747 aa).

Residues 1-234 (MNHSPLKTAL…SFGHSRASSK (234 aa)) form a required for binding to single stranded DNA region. Residues 1–286 (MNHSPLKTAL…ESAKQQVYQL (286 aa)) are required for interaction with EIF4A1. A Phosphoserine modification is found at serine 4. The disordered stretch occupies residues 48 to 68 (TVKRQKSKSSQSSTLSHSNRG). Phosphorylation in this region is required for cytoplasmic localization and protein stabilization regions lie at residues 54 to 69 (SKSS…NRGS) and 116 to 191 (RFSS…STCS). Phosphoserine; by PKB/AKT2 is present on serine 118. Phosphoserine is present on residues serine 119, serine 121, and serine 142. The interval 160-269 (YCDPRGTLRK…KYQAIGAYYI (110 aa)) is required for WNT-mediated nuclear localization. 9 ARM repeats span residues 243–274 (SGLT…HTCF), 275–316 (QDES…NLVF), 317–359 (RSTT…NLSS), 360–415 (TDEL…KRLG), 416–463 (MREL…NCVA), 525–556 (NYDC…LNLM), 557–603 (GKSK…IARL), 604–649 (LQSG…SHTG), and 650–713 (NTSN…DMWS).

It belongs to the beta-catenin family. Part of a complex that contains DSG3, PKP1, YAP1 and YWHAG; the complex is required for localization of DSG3 and YAP1 to the cell membrane in keratinocytes. Interacts with DSP. Interacts (via N-terminus) with KRT5/CK5, KRT8/CK8 (via rod domain), KRT15/CK15 and KRT18/CK18 (via rod domain) as part of intermediate filaments. Interacts with VIM (via rod domain). Interacts with DSP. Interacts with DES. Interacts with FXR1; the interaction may facilitate the binding of PKP1 to PKP2, PKP3 and DSP mRNA. Interacts (via N-terminus) with EIF4A1; the interaction promotes EIF4A1 recruitment to the cap-dependent translation complex and EIF4A1 ATPase activity. Interacts with TJP1/ZO-1; the interaction facilitates TJP1/ZO-1 localization to the plasma membrane. Interacts (when phosphorylated) with YWHAG; the interaction results in translocation of PKP1 to the cytoplasm and loss of intercellular adhesion in keratinocytes. Phosphorylated by AKT2; required for interaction with YWHAG and subsequent localization away from desmosomes to the cytoplasm. Phosphorylation of Ser-118 by AKT2 promotes PKP1-driven cap-dependent mRNA translation and decreases intercellular adhesion, phosphorylation is promoted by insulin. Phosphorylation by RIPK4 at the N-terminus is required for its role in differentiation of keratinocytes and DSG1 localization at cell junctions. In terms of tissue distribution, expressed in stratified squamous, complex, glandular duct and bladder epithelia (at protein level). Widely expressed (at protein level).

It localises to the cell junction. Its subcellular location is the desmosome. The protein localises to the nucleus. The protein resides in the cytoplasm. It is found in the perinuclear region. It localises to the cell membrane. Its subcellular location is the stress granule. A component of desmosome cell-cell junctions which are required for positive regulation of cellular adhesion. Plays a role in desmosome protein expression regulation and localization to the desmosomal plaque, thereby maintaining cell sheet integrity and anchorage of desmosomes to intermediate filaments. Required for localization of DSG3 and YAP1 to the cell membrane in keratinocytes in response to mechanical strain, via the formation of an interaction complex composed of DSG3, YAP1, PKP1 and YWHAG. Positively regulates differentiation of keratinocytes, potentially via promoting localization of DSG1 at desmosome cell junctions. Required for calcium-independent development and maturation of desmosome plaques specifically at lateral cell-cell contacts in differentiating keratinocytes. Plays a role in the maintenance of DSG3 protein abundance, DSG3 clustering and localization of these clusters to the cell membrane in keratinocytes. May also promote keratinocyte proliferation and morphogenesis during postnatal development. Required for tight junction inside-out transepidermal barrier function of the skin. Promotes Wnt-mediated proliferation and differentiation of ameloblasts, via facilitating TJP1/ZO-1 localization to tight junctions. Binds single-stranded DNA (ssDNA), and may thereby play a role in sensing DNA damage and promoting cell survival. Positively regulates cap-dependent translation and as a result cell proliferation, via recruitment of EIF4A1 to the initiation complex and promotion of EIF4A1 ATPase activity. Regulates the mRNA stability and protein abundance of desmosome components PKP2, PKP3, DSC2 and DSP, potentially via its interaction with FXR1. This chain is Plakophilin-1 (PKP1), found in Homo sapiens (Human).